Reading from the N-terminus, the 1338-residue chain is Insulin receptor substrate 2 (1338 aa).

Residues 1 to 12 are compositionally biased toward pro residues; the sequence is MASPPRHGPPGP. 2 disordered regions span residues 1–31 and 49–72; these read MASPPRHGPPGPASGDGPNLNNNNNNNNHSV and VLRGPGAGGDEATAGGGSAPQPPR. A PH domain is found at 16–144; it reads DGPNLNNNNN…WYRALTDLVS (129 aa). The segment covering 19-28 has biased composition (low complexity); the sequence is NLNNNNNNNN. A compositionally biased stretch (gly residues) spans 53–66; the sequence is PGAGGDEATAGGGS. Residues 194–298 form the IRS-type PTB domain; that stretch reads YREVWQVNLK…EAMKALKELF (105 aa). The disordered stretch occupies residues 303-411; the sequence is RSKSQSSGSS…SHTLSGGCGG (109 aa). S306 and S346 each carry phosphoserine. Phosphothreonine is present on T350. Phosphoserine occurs at positions 365, 384, 388, and 391. R412 is modified (omega-N-methylarginine). The segment at 428–537 is disordered; it reads SRSMSMPVAH…PPARDGGGGG (110 aa). Positions 444–453 are enriched in low complexity; the sequence is SPGSLSSSSG. The span at 459–471 shows a compositional bias: pro residues; the sequence is YPPPPGPHPPLPH. The segment covering 475-493 has biased composition (low complexity); that stretch reads HGPGQRPSSGSASASGSPS. The residue at position 520 (T520) is a Phosphothreonine. S523 is subject to Phosphoserine. T527 carries the post-translational modification Phosphothreonine. Position 540 is a phosphotyrosine; by INSR (Y540). Positions 540-543 match the YXXM motif 1 motif; that stretch reads YGYM. S560 is modified (phosphoserine; by PLK1). Residue S577 is modified to Phosphoserine. 2 positions are modified to phosphothreonine: T579 and T580. S594 is modified (phosphoserine). The YXXM motif 2 motif lies at 598 to 601; the sequence is YTLM. 2 positions are modified to phosphoserine: S608 and S620. 2 positions are modified to phosphotyrosine; by INSR: Y653 and Y675. 2 short sequence motifs (YXXM motif) span residues 653–656 and 675–678; these read YMPM. S679 and S682 each carry phosphoserine. Residues 703-719 show a composition bias toward low complexity; the sequence is PSAGPAGPAPTSAAGRT. A disordered region spans residues 703–739; it reads PSAGPAGPAPTSAAGRTFPASGGGYKASSPAESSPED. Residues S735 and S736 each carry the phosphoserine modification. The YXXM motif 5 signature appears at 742–745; it reads YMRM. Position 770 is a phosphoserine (S770). The residue at position 779 (T779) is a Phosphothreonine. The residue at position 805 (S805) is a Phosphoserine. The YXXM motif 6 signature appears at 823-826; sequence YVLM. Position 828 is a phosphoserine (S828). Residues 840–1101 form a disordered region; sequence EPQATPGPSQ…KPEAARVASP (262 aa). The segment covering 859 to 870 has biased composition (pro residues); it reads TQPPHPVVPSPV. Position 915 is a phosphoserine (S915). Y919 is modified (phosphotyrosine; by INSR). The segment covering 938–967 has biased composition (low complexity); the sequence is LLASAASSSSLLSASSPASSLGSGTPGTSS. Residue S973 is modified to Phosphoserine. Position 978 is a phosphotyrosine; by INSR (Y978). Residues 1013-1022 are compositionally biased toward pro residues; that stretch reads PYPPLPPRPS. The YXXM motif 7 motif lies at 1072–1075; that stretch reads YTEM. T1082 is subject to Phosphothreonine. Over residues 1083-1093 the composition is skewed to pro residues; that stretch reads PPQPIAAPPKP. S1100 is subject to Phosphoserine. A Phosphoserine; by PLK1 modification is found at S1109. The tract at residues 1121–1296 is disordered; that stretch reads LQASQPPDPH…TRSLGGLISA (176 aa). Positions 1150–1165 are enriched in low complexity; that stretch reads ETFSSTTTVTPVSPSF. T1159 carries the phosphothreonine modification. Phosphoserine is present on residues S1162, S1174, S1176, and S1186. Residues 1174–1183 show a composition bias toward polar residues; that stretch reads SASVENVSLR. Residues 1188-1198 are compositionally biased toward gly residues; sequence GGVGVGPGGGD. Phosphoserine is present on S1203. The span at 1224 to 1236 shows a compositional bias: gly residues; the sequence is QPGGLVGCPGSGG. Y1253 is subject to Phosphotyrosine; by INSR. Residues 1263–1277 are compositionally biased toward pro residues; sequence GLPPQPQPPPPPLPQ. Residue K1331 forms a Glycyl lysine isopeptide (Lys-Gly) (interchain with G-Cter in ubiquitin) linkage.

Interacts with PHIP. Interacts with SH2B1; this interaction enhances leptin-induced activation of the PI3-kinase pathway. Interacts with GRB2. Interacts with PIK3R1. Interacts with DVL2; this interaction promotes the Wnt/beta-catenin signaling pathway. Post-translationally, phosphorylation fluctuates in a cell-cycle dependent manner with hyperphosphorylation during mitosis. Phosphorylated at Ser-560 and Ser-1109 by PLK1; these phosphorylations prevent the activation of the PI3K pathway upon growth factor stimulation by inhibiting the binding between IRS2 and the PI3K pathway components and increasing the level of IRS2 protein degradation. In addition, they prevent premature mitotic exit. In terms of processing, monoubiquitinated by NEDD4; leading to enhanced IGF1 signaling. During cell cycle, ubiquitination and proteasomal degradation are controlled by FZR1.

It is found in the cytoplasm. The protein resides in the cytosol. Its function is as follows. Signaling adapter protein that participates in the signal transduction from two prominent receptor tyrosine kinases, insulin receptor/INSR and insulin-like growth factor I receptor/IGF1R. Plays therefore an important role in development, growth, glucose homeostasis as well as lipid metabolism. Upon phosphorylation by the insulin receptor, functions as a signaling scaffold that propagates insulin action through binding to SH2 domain-containing proteins including the p85 regulatory subunit of PI3K, NCK1, NCK2, GRB2 or SHP2. Recruitment of GRB2 leads to the activation of the guanine nucleotide exchange factor SOS1 which in turn triggers the Ras/Raf/MEK/MAPK signaling cascade. Activation of the PI3K/AKT pathway is responsible for most of insulin metabolic effects in the cell, and the Ras/Raf/MEK/MAPK is involved in the regulation of gene expression and in cooperation with the PI3K pathway regulates cell growth and differentiation. Acts a positive regulator of the Wnt/beta-catenin signaling pathway through suppression of DVL2 autophagy-mediated degradation leading to cell proliferation. Plays a role in cell cycle progression by promoting a robust spindle assembly checkpoint (SAC) during M-phase. In macrophages, IL4-induced tyrosine phosphorylation of IRS2 leads to the recruitment and activation of phosphoinositide 3-kinase (PI3K). In Homo sapiens (Human), this protein is Insulin receptor substrate 2 (IRS2).